The following is an 890-amino-acid chain: Possible lysine-specific histone demethylase 1 (890 aa).

Residues 1–13 (MKPTQFGGSSSKM) show a composition bias toward polar residues. The disordered stretch occupies residues 1 to 164 (MKPTQFGGSS…TVLSGQEGAV (164 aa)). Phosphoserine is present on residues S24 and S27. Residues 84 to 109 (NRPSGSGDTASNDKSGSASMGPNNQQ) are compositionally biased toward polar residues. Residues 110 to 122 (AERRSQSQTRKSE) show a composition bias toward basic and acidic residues. A compositionally biased stretch (low complexity) spans 123–138 (ANATSSSVSGPSAGNS). Positions 160 to 259 (QEGAVFQSRL…FGIFKRLKPI (100 aa)) constitute an SWIRM domain. 267–295 (VIVIGAGISGLAVAHQLQQFGMDVIVLEA) contributes to the FAD binding site. Positions 860–890 (DLSPNLSDSSPSSKKSEENSNSNTADSTELQ) are disordered. Positions 861 to 882 (LSPNLSDSSPSSKKSEENSNSN) are enriched in low complexity. S866 is subject to Phosphoserine.

It belongs to the flavin monoamine oxidase family. As to quaternary structure, component of a complex that contains at least HDAC1/Rpd3, CoRest and Su(var)3-3/Hdm. The cofactor is FAD.

Its subcellular location is the nucleus. It localises to the chromosome. Its function is as follows. Probable histone demethylase that specifically demethylates 'Lys-4' of histone H3, a specific tag for epigenetic transcriptional activation, thereby acting as a corepressor. Required for heterochromatic gene silencing. Acts by oxidizing the substrate by FAD to generate the corresponding imine that is subsequently hydrolyzed. Demethylates both mono- and tri-methylated 'Lys-4' of histone H3. May also demethylate 'Lys-9' of histone H3, Plays a role in the repression of neuronal genes. This chain is Possible lysine-specific histone demethylase 1 (Su(var)3-3), found in Drosophila melanogaster (Fruit fly).